The following is a 168-amino-acid chain: Small ribosomal subunit protein uS7c (168 aa).

It belongs to the universal ribosomal protein uS7 family. As to quaternary structure, part of the 30S ribosomal subunit.

It is found in the plastid. Its subcellular location is the chloroplast. One of the primary rRNA binding proteins, it binds directly to 16S rRNA where it nucleates assembly of the head domain of the 30S subunit. This chain is Small ribosomal subunit protein uS7c (rps7), found in Chlamydomonas reinhardtii (Chlamydomonas smithii).